The primary structure comprises 162 residues: Phosphopantetheine adenylyltransferase (162 aa).

Ser-9 contributes to the substrate binding site. Residues 9-10 (SF) and His-17 contribute to the ATP site. Substrate-binding residues include Lys-41, Thr-73, and Arg-87. ATP contacts are provided by residues 88–90 (GLR), Glu-98, and 123–129 (YSFISSS).

Belongs to the bacterial CoaD family. In terms of assembly, homohexamer. Requires Mg(2+) as cofactor.

The protein resides in the cytoplasm. The enzyme catalyses (R)-4'-phosphopantetheine + ATP + H(+) = 3'-dephospho-CoA + diphosphate. Its pathway is cofactor biosynthesis; coenzyme A biosynthesis; CoA from (R)-pantothenate: step 4/5. Its function is as follows. Reversibly transfers an adenylyl group from ATP to 4'-phosphopantetheine, yielding dephospho-CoA (dPCoA) and pyrophosphate. This is Phosphopantetheine adenylyltransferase from Carboxydothermus hydrogenoformans (strain ATCC BAA-161 / DSM 6008 / Z-2901).